The primary structure comprises 151 residues: Transcription antitermination protein NusB (151 aa).

This sequence belongs to the NusB family.

Involved in transcription antitermination. Required for transcription of ribosomal RNA (rRNA) genes. Binds specifically to the boxA antiterminator sequence of the ribosomal RNA (rrn) operons. This is Transcription antitermination protein NusB from Photobacterium profundum (strain SS9).